A 319-amino-acid chain; its full sequence is Tyrosine--tRNA ligase (319 aa).

Tyr40 is a binding site for L-tyrosine. The 'HIGH' region signature appears at 45 to 53 (PSGRIHMGH). Tyr159, Gln163, Asp166, and Gln181 together coordinate L-tyrosine. The 'KMSKS' region signature appears at 216-220 (KMSSS). Position 219 (Ser219) interacts with ATP.

Belongs to the class-I aminoacyl-tRNA synthetase family. TyrS type 3 subfamily. In terms of assembly, homodimer.

The protein localises to the cytoplasm. It catalyses the reaction tRNA(Tyr) + L-tyrosine + ATP = L-tyrosyl-tRNA(Tyr) + AMP + diphosphate + H(+). Functionally, catalyzes the attachment of tyrosine to tRNA(Tyr) in a two-step reaction: tyrosine is first activated by ATP to form Tyr-AMP and then transferred to the acceptor end of tRNA(Tyr). The polypeptide is Tyrosine--tRNA ligase (Methanococcus maripaludis (strain DSM 14266 / JCM 13030 / NBRC 101832 / S2 / LL)).